We begin with the raw amino-acid sequence, 420 residues long: Tyrosine--tRNA ligase (420 aa).

Tyr-33 is a binding site for L-tyrosine. The 'HIGH' region signature appears at 38 to 47 (PTADSLHVGH). L-tyrosine is bound by residues Tyr-167 and Gln-171. Residues 227–231 (KFGKT) carry the 'KMSKS' region motif. Lys-230 provides a ligand contact to ATP. The 67-residue stretch at 353–419 (LTVADLLVKV…GKRNYALVKV (67 aa)) folds into the S4 RNA-binding domain.

Belongs to the class-I aminoacyl-tRNA synthetase family. TyrS type 1 subfamily. As to quaternary structure, homodimer.

It localises to the cytoplasm. It carries out the reaction tRNA(Tyr) + L-tyrosine + ATP = L-tyrosyl-tRNA(Tyr) + AMP + diphosphate + H(+). In terms of biological role, catalyzes the attachment of tyrosine to tRNA(Tyr) in a two-step reaction: tyrosine is first activated by ATP to form Tyr-AMP and then transferred to the acceptor end of tRNA(Tyr). This chain is Tyrosine--tRNA ligase, found in Anaeromyxobacter dehalogenans (strain 2CP-1 / ATCC BAA-258).